A 161-amino-acid chain; its full sequence is uncharacterized protein (161 aa).

A disordered region spans residues 126-161 (TPSNCGESSTSSGQSSGDESNCSLRTHGVYTRGEQH). Low complexity predominate over residues 128–148 (SNCGESSTSSGQSSGDESNCS).

It belongs to the herpesviridae US1 family.

This is an uncharacterized protein from Human cytomegalovirus (strain AD169) (HHV-5).